The following is a 90-amino-acid chain: UPF0297 protein BH1268 (90 aa).

Belongs to the UPF0297 family.

In Halalkalibacterium halodurans (strain ATCC BAA-125 / DSM 18197 / FERM 7344 / JCM 9153 / C-125) (Bacillus halodurans), this protein is UPF0297 protein BH1268.